The sequence spans 5146 residues: SCO-spondin (5146 aa).

Residues 1 to 17 (MLLPALLFGAAWALANG) form the signal peptide. The EMI domain maps to 18-94 (RWCEQTETVL…ACCPGWGGTH (77 aa)). Asn80, Asn122, and Asn153 each carry an N-linked (GlcNAc...) asparagine glycan. The VWFD 1 domain maps to 185–356 (ATCATWSGFH…RLPDSELGCL (172 aa)). 3 disulfide bridges follow: Cys187–Cys317, Cys209–Cys355, and Cys231–Cys237. A glycan (N-linked (GlcNAc...) asparagine) is linked at Asn255. Residues 464 to 519 (CPGGQLYSDCASACPPSCSAVGEGSEWSCGEECVSGCECPPGLFWDGALCVPAARC) enclose the TIL 1 domain. Residues 557–730 (AECAVGGDGH…FQVAGGGTCS (174 aa)) enclose the VWFD 2 domain. 2 disulfide bridges follow: Cys559–Cys692 and Cys583–Cys729. Asn814 is a glycosylation site (N-linked (GlcNAc...) asparagine). The TIL 2 domain maps to 822 to 875 (CPGGQEYQECAPACDRNCGEPEDCGELDNCVAGCNCPLGLLWDPEGQCVPPNLC). Residue Asn906 is glycosylated (N-linked (GlcNAc...) asparagine). The VWFD 3 domain occupies 1008–1178 (GRCRASGAPH…HSWRLGPLCP (171 aa)). 3 disulfide bridges follow: Cys1010–Cys1142, Cys1032–Cys1177, and Cys1053–Cys1060. The 57-residue stretch at 1271-1327 (CERGQVYEACGPTCPATCHDHRPEPGWPCRAVACVEGCFCPEGTLLHGGVCLEPAAC) folds into the TIL 3 domain. Residue Asn1349 is glycosylated (N-linked (GlcNAc...) asparagine). 6 consecutive LDL-receptor class A domains span residues 1372–1409 (GCAE…EGCA), 1412–1447 (VCGE…EQGC), 1448–1484 (PCPQ…ESCL), 1488–1526 (DCAP…GHCP), 1561–1597 (PCGP…SGCD), and 1599–1638 (PCAP…GACE). Cystine bridges form between Cys1373/Cys1386, Cys1380/Cys1399, Cys1393/Cys1408, Cys1413/Cys1425, Cys1420/Cys1438, Cys1432/Cys1447, Cys1449/Cys1461, Cys1456/Cys1474, Cys1468/Cys1483, Cys1489/Cys1501, Cys1496/Cys1514, Cys1508/Cys1525, Cys1562/Cys1574, Cys1569/Cys1587, Cys1581/Cys1596, Cys1600/Cys1613, Cys1607/Cys1626, and Cys1620/Cys1637. Asn1647 carries an N-linked (GlcNAc...) asparagine glycan. The region spanning 1652–1690 (PCPEYSCPDGLCIGFQQVCDGQPDCELAGTAGPSPEEQG) is the LDL-receptor class A 7 domain. 2 TSP type-1 domains span residues 1691-1745 (CGAW…AACP) and 1747-1805 (DGVW…DGCP). Disulfide bonds link Cys1703–Cys1739, Cys1707–Cys1744, and Cys1718–Cys1729. Asn1806 carries an N-linked (GlcNAc...) asparagine glycan. The TIL 4 domain occupies 1809–1865 (CSGELVFHACVPCPLTCDDISGQATCPPDRPCGGPGCWCPAGQVLGAQGRCVWPRQC). EGF-like domains lie at 1821–1860 (CPLT…GRCV) and 1861–1898 (WPRQ…RRCQ). The region spanning 1906–1962 (NCGWSAWSPWAECLGPCGSRSVQWSFRSPNNPRPAGRGHQCRGLHRKARRCQTEPCE) is the TSP type-1 3 domain. Disulfide bonds link Cys1907-Cys1946, Cys1918-Cys1922, and Cys1956-Cys1961. A VWFC 1 domain is found at 1962 to 2022 (EGCEQDGRVH…GVGESCCHCV (61 aa)). Asn2027 and Asn2127 each carry an N-linked (GlcNAc...) asparagine glycan. 4 cysteine pairs are disulfide-bonded: Cys2062–Cys2220, Cys2226–Cys2238, Cys2233–Cys2251, and Cys2245–Cys2260. The F5/8 type C domain occupies 2062–2220 (CYSPLGLARL…GPLRVELLGC (159 aa)). In terms of domain architecture, LDL-receptor class A 8 spans 2225–2261 (LCLGVGHRCVSGECAPRGAPCDGVEDCKDGSDEEGCV). The tract at residues 2262–2346 (TPPAGAGRIE…TPTSQPEAQA (85 aa)) is disordered. Composition is skewed to polar residues over residues 2273-2284 (TAWSSAPSSAQP) and 2331-2343 (GSVQ…SQPE). LDL-receptor class A domains lie at 2382–2418 (QCSP…RPCA) and 2442–2478 (LCSP…NGCV). Intrachain disulfides connect Cys2383–Cys2395, Cys2390–Cys2408, Cys2402–Cys2417, Cys2443–Cys2455, Cys2450–Cys2468, Cys2462–Cys2477, Cys2480–Cys2516, Cys2491–Cys2495, Cys2526–Cys2531, Cys2546–Cys2583, Cys2550–Cys2588, and Cys2561–Cys2573. TSP type-1 domains follow at residues 2479–2532 (DCGL…QACP) and 2534–2589 (AGAW…QPCA). One can recognise a TIL 5 domain in the interval 2611 to 2654 (VPPCPPSCLDPEANRSCSGLCLEGCRCPPGLLLQDAGCLPLSEC). Residues Asn2624 and Asn2673 are each glycosylated (N-linked (GlcNAc...) asparagine). 3 TSP type-1 domains span residues 2694–2748 (PCGW…SACG), 2751–2807 (VPGW…PVCL), and 2809–2862 (LGVW…QPCT). Cystine bridges form between Cys2695-Cys2733, Cys2706-Cys2710, Cys2743-Cys2747, Cys2763-Cys2801, Cys2767-Cys2806, Cys2783-Cys2791, Cys2821-Cys2856, Cys2825-Cys2861, and Cys2836-Cys2846. N-linked (GlcNAc...) asparagine glycans are attached at residues Asn2915 and Asn2946. 2 consecutive TSP type-1 domains span residues 2964 to 3019 (ACGW…RPCG) and 3020 to 3071 (GPAG…GVCP). 3 cysteine pairs are disulfide-bonded: Cys2965-Cys3003, Cys2976-Cys2980, and Cys3013-Cys3018. A glycan (N-linked (GlcNAc...) asparagine) is linked at Asn3041. In terms of domain architecture, TIL 6 spans 3070-3122 (CPPGKRWLDCAQGPASCAELSAPRGADQPCHPGCYCPSGMLLLNNACVPTQDC). 2 N-linked (GlcNAc...) asparagine glycosylation sites follow: Asn3143 and Asn3153. 2 TSP type-1 domains span residues 3163-3230 (QPTW…PECD) and 3232-3287 (AGGW…LPCP). Disulfide bonds link Cys3175–Cys3224, Cys3179–Cys3229, Cys3190–Cys3214, Cys3244–Cys3281, Cys3248–Cys3286, and Cys3259–Cys3271. N-linked (GlcNAc...) asparagine glycosylation is present at Asn3290. The TIL 7 domain maps to 3295–3345 (EGAEYSACGPPCPRSCDDLVHCVWHCQPGCYCPPGQVLSADGTVHVQPGHC). TSP type-1 domains are found at residues 3388–3450 (PGAW…PECP) and 3452–3507 (DGAW…TQCT). 6 disulfides stabilise this stretch: Cys3400/Cys3443, Cys3404/Cys3449, Cys3415/Cys3427, Cys3464/Cys3499, Cys3467/Cys3506, and Cys3477/Cys3489. Asn3502, Asn3580, and Asn3607 each carry an N-linked (GlcNAc...) asparagine glycan. The TSP type-1 15 domain occupies 3626 to 3674 (LGLWGSWGPWEDCSVSCGGGEQLRFRRCPRPPCPGPARQSRTCRTQVCR). 3 disulfides stabilise this stretch: Cys3638-Cys3668, Cys3642-Cys3673, and Cys3653-Cys3658. Asn3783 is a glycosylation site (N-linked (GlcNAc...) asparagine). TSP type-1 domains are found at residues 3802-3858 (AGGF…PECP), 3872-3924 (PGGW…PSCT), 3938-3994 (NCSW…RACP), and 3996-4051 (PGGW…TPCE). 3 disulfides stabilise this stretch: Cys3814–Cys3852, Cys3818–Cys3857, and Cys3830–Cys3842. N-linked (GlcNAc...) asparagine glycosylation is found at Asn3906 and Asn3938. 6 disulfides stabilise this stretch: Cys3939/Cys3975, Cys3950/Cys3954, Cys3988/Cys3993, Cys4008/Cys4045, Cys4012/Cys4050, and Cys4023/Cys4035. Residues 4054 to 4109 (CPAGMEVVSCANRCPRRCSDLQEGIVCQEDQACQQGCRCPEGSLEQDGGCVPLGHC) enclose the TIL 8 domain. In terms of domain architecture, VWFC 2 spans 4101-4168 (GGCVPLGHCE…AWSPCSRSCG (68 aa)). Residue Asn4131 is glycosylated (N-linked (GlcNAc...) asparagine). 4 TSP type-1 domains span residues 4151–4204 (HCAW…SPCP), 4245–4300 (LGAW…WPCP), 4302–4358 (LPDT…GPCL), and 4360–4414 (ECVW…GNCS). Cystine bridges form between Cys4152-Cys4188, Cys4163-Cys4167, Cys4198-Cys4203, Cys4257-Cys4294, Cys4261-Cys4299, and Cys4272-Cys4284. Residue Asn4341 is glycosylated (N-linked (GlcNAc...) asparagine). 3 cysteine pairs are disulfide-bonded: Cys4361/Cys4398, Cys4372/Cys4374, and Cys4408/Cys4413. N-linked (GlcNAc...) asparagine glycosylation occurs at Asn4412. The TIL 9 domain occupies 4418–4473 (CAPPFEFQACGSPCTGLCATYLSPWLCQDLPPCQPGCYCPEGLLEQAGGCVPPEQC). Positions 4610–4661 (LCQWGPWGAWSPCQVPCSGGFRLRWREAGIPPGGGCRGPWAQTESCNMGPCP) constitute a TSP type-1 24 domain. Cystine bridges form between Cys4611/Cys4645, Cys4622/Cys4626, and Cys4655/Cys4660. In terms of domain architecture, TIL 10 spans 4675-4721 (DCANQCPRSCVDLWDRVECLQGPCRPGCRCPPGQLVQDGHCVPVSSC). 4 N-linked (GlcNAc...) asparagine glycosylation sites follow: Asn4729, Asn4746, Asn4751, and Asn4772. Positions 4761–4814 (CPTLGPWSAWSNCSAPCGGGTTKRHRSCKEGPGVTPCQAQDMEQQQDCNLQPCP) constitute a TSP type-1 25 domain. Disulfide bonds link Cys4773-Cys4808, Cys4777-Cys4813, and Cys4788-Cys4797. The TIL 11 domain maps to 4816–4870 (CPPGQVLSACAVSCPRLCSHLQPGTPCMQEPCQLGCDCPRGQLLHNGTCVPPAEC). N-linked (GlcNAc...) asparagine glycans are attached at residues Asn4861, Asn4901, Asn4947, and Asn4954. Residues 4983–5041 (CECWHHGRPHPPGSEWQKACESCRCVSGESICTQHCPPLTCAQGETAVQEPGGCCPTCR) form the VWFC 3 domain. 4 cysteine pairs are disulfide-bonded: Cys5052–Cys5100, Cys5066–Cys5117, Cys5076–Cys5133, and Cys5080–Cys5135. The 88-residue stretch at 5052 to 5139 (CRHLTELRNL…IHSCQCSACQ (88 aa)) folds into the CTCK domain. N-linked (GlcNAc...) asparagine glycosylation occurs at Asn5060.

This sequence belongs to the thrombospondin family. In terms of tissue distribution, subcommissural organ. Located at the boundary of the diencephalon and mesencephalon beneath the posterior commissure at the point where the axons cross the midline.

The protein resides in the secreted. It localises to the extracellular space. In terms of biological role, involved in the modulation of neuronal aggregation. May be involved in developmental events during the formation of the central nervous system. The sequence is that of SCO-spondin (SSPO) from Bos taurus (Bovine).